Reading from the N-terminus, the 343-residue chain is S-adenosylmethionine:tRNA ribosyltransferase-isomerase (343 aa).

It belongs to the QueA family. Monomer.

It is found in the cytoplasm. The enzyme catalyses 7-aminomethyl-7-carbaguanosine(34) in tRNA + S-adenosyl-L-methionine = epoxyqueuosine(34) in tRNA + adenine + L-methionine + 2 H(+). It functions in the pathway tRNA modification; tRNA-queuosine biosynthesis. In terms of biological role, transfers and isomerizes the ribose moiety from AdoMet to the 7-aminomethyl group of 7-deazaguanine (preQ1-tRNA) to give epoxyqueuosine (oQ-tRNA). This chain is S-adenosylmethionine:tRNA ribosyltransferase-isomerase, found in Geobacter metallireducens (strain ATCC 53774 / DSM 7210 / GS-15).